The primary structure comprises 358 residues: tRNA-specific 2-thiouridylase MnmA (358 aa).

Residues 8–15 and Leu-34 each bind ATP; that span reads GLSGGVDS. The Nucleophile role is filled by Cys-95. Cys-95 and Cys-194 form a disulfide bridge. Gly-120 is an ATP binding site. Residues 144-146 are interaction with tRNA; it reads KDQ. The Cysteine persulfide intermediate role is filled by Cys-194. Residues 299–300 are interaction with tRNA; sequence RY.

The protein belongs to the MnmA/TRMU family.

It is found in the cytoplasm. It carries out the reaction S-sulfanyl-L-cysteinyl-[protein] + uridine(34) in tRNA + AH2 + ATP = 2-thiouridine(34) in tRNA + L-cysteinyl-[protein] + A + AMP + diphosphate + H(+). Functionally, catalyzes the 2-thiolation of uridine at the wobble position (U34) of tRNA, leading to the formation of s(2)U34. This is tRNA-specific 2-thiouridylase MnmA from Synechocystis sp. (strain ATCC 27184 / PCC 6803 / Kazusa).